We begin with the raw amino-acid sequence, 174 residues long: Transcriptional repressor NrdR (174 aa).

Residues 3–34 fold into a zinc finger; that stretch reads CPICHFPETDVIDTRKLYEGEVIRRRRKCRAC. The ATP-cone domain occupies 49–139; it reads LMVVKKDGTR…VYRSFADIGK (91 aa). Positions 151–174 are disordered; the sequence is EGTRNGHSSAATTDQGTTDNHSRM. Positions 155-174 are enriched in polar residues; sequence NGHSSAATTDQGTTDNHSRM.

Belongs to the NrdR family. The cofactor is Zn(2+).

In terms of biological role, negatively regulates transcription of bacterial ribonucleotide reductase nrd genes and operons by binding to NrdR-boxes. The sequence is that of Transcriptional repressor NrdR from Chloroflexus aggregans (strain MD-66 / DSM 9485).